Here is a 372-residue protein sequence, read N- to C-terminus: Flagellar P-ring protein (372 aa).

Residues 1 to 26 (MNLSSLSFRLLATLLGACVVVAPASA) form the signal peptide.

The protein belongs to the FlgI family. The basal body constitutes a major portion of the flagellar organelle and consists of four rings (L,P,S, and M) mounted on a central rod.

The protein resides in the periplasm. Its subcellular location is the bacterial flagellum basal body. Assembles around the rod to form the L-ring and probably protects the motor/basal body from shearing forces during rotation. This chain is Flagellar P-ring protein, found in Xanthomonas oryzae pv. oryzae (strain MAFF 311018).